A 258-amino-acid chain; its full sequence is Synaptosomal-associated protein 29 (258 aa).

The interval 1 to 41 is disordered; the sequence is MSAYPKSYNPFDDDGEDEGARPAPWRDARDLPDGPDAPADR. The segment covering 18-32 has biased composition (basic and acidic residues); that stretch reads EGARPAPWRDARDLP. Residues 76 to 107 adopt a coiled-coil conformation; sequence ASSEELARQRGVLERTEKMVDKMDQDLKISQK. 3 positions are modified to phosphoserine: S77, S78, and S114. Phosphothreonine is present on residues T130 and T137. The disordered stretch occupies residues 150 to 191; that stretch reads ISTSKEQEAKYQASHPNLRKLDDTDPVPRGAGSAMSTDAYPK. Phosphoserine is present on residues S163, S182, S185, S204, and S210. Residues 196 to 258 form the t-SNARE coiled-coil homology domain; that stretch reads RAYHQKIDSN…KSTERKVRQL (63 aa).

Belongs to the SNAP-25 family. In terms of assembly, forms a SNARE complex, composed of VAMP8, SNAP29 and STX17, involved in fusion of autophagosome with lysosome. Interacts with multiple syntaxins including STX6. Interacts with EIPR1. Interacts with STX17; this interaction is increased in the absence of TMEM39A. (Microbial infection) Interacts with Hantaan hantavirus nucleoprotein; this interaction prevents the breakdown of the viral glycoprotein N by virus-triggered autophagy. As to quaternary structure, (Microbial infection) The interaction with STX17 is decreased in presence of SARS coronavirus-2/SARS-CoV-2 ORF3A protein. Found in brain, heart, kidney, liver, lung, placenta, skeletal muscle, spleen and pancreas.

The protein localises to the cytoplasm. It is found in the golgi apparatus membrane. The protein resides in the cytoplasmic vesicle. It localises to the autophagosome membrane. Its subcellular location is the cell projection. The protein localises to the cilium membrane. Its function is as follows. SNAREs, soluble N-ethylmaleimide-sensitive factor-attachment protein receptors, are essential proteins for fusion of cellular membranes. SNAREs localized on opposing membranes assemble to form a trans-SNARE complex, an extended, parallel four alpha-helical bundle that drives membrane fusion. SNAP29 is a SNARE involved in autophagy through the direct control of autophagosome membrane fusion with the lysososome membrane. Also plays a role in ciliogenesis by regulating membrane fusions. This chain is Synaptosomal-associated protein 29, found in Homo sapiens (Human).